The sequence spans 367 residues: DNA replication and repair protein RecF (367 aa).

Gly30–Thr37 contributes to the ATP binding site.

It belongs to the RecF family.

The protein resides in the cytoplasm. Its function is as follows. The RecF protein is involved in DNA metabolism; it is required for DNA replication and normal SOS inducibility. RecF binds preferentially to single-stranded, linear DNA. It also seems to bind ATP. The protein is DNA replication and repair protein RecF of Pseudomonas putida (strain ATCC 47054 / DSM 6125 / CFBP 8728 / NCIMB 11950 / KT2440).